Reading from the N-terminus, the 254-residue chain is Translation initiation factor 2 subunit alpha (254 aa).

The 72-residue stretch at 10–81 (GDLVVVKITE…ERKVVDLSLK (72 aa)) folds into the S1 motif domain.

This sequence belongs to the eIF-2-alpha family. In terms of assembly, heterotrimer composed of an alpha, a beta and a gamma chain.

Its function is as follows. eIF-2 functions in the early steps of protein synthesis by forming a ternary complex with GTP and initiator tRNA. This Thermoplasma acidophilum (strain ATCC 25905 / DSM 1728 / JCM 9062 / NBRC 15155 / AMRC-C165) protein is Translation initiation factor 2 subunit alpha.